The following is a 435-amino-acid chain: Monodehydroascorbate reductase 4, cytosolic (435 aa).

Residues 14–17, E41, R48, K53, I96, and 147–148 contribute to the FAD site; these read GGVA and RD. NAD(+) contacts are provided by residues 172-178, E196, R202, and G261; that span reads GGYIGLE. 174-178 provides a ligand contact to NADP(+); the sequence is YIGLE. NADP(+) is bound by residues R202 and G261. D298 contributes to the FAD binding site. 314–315 contributes to the NAD(+) binding site; that stretch reads EH. NADP(+) is bound at residue 314–315; the sequence is EH. V316 contacts FAD. R320 is an L-ascorbate binding site. Residue Y349 participates in FAD binding. Position 349 (Y349) interacts with NAD(+). NADP(+) is bound at residue Y349. L-ascorbate is bound at residue R351.

It belongs to the FAD-dependent oxidoreductase family. Requires FAD as cofactor. In terms of tissue distribution, expressed in anthers.

It is found in the cytoplasm. It catalyses the reaction 2 monodehydro-L-ascorbate radical + NADH + H(+) = 2 L-ascorbate + NAD(+). Its function is as follows. Catalyzes the conversion of monodehydroascorbate to ascorbate, oxidizing NADH in the process. Ascorbate is a major antioxidant against reactive oxygen species (ROS) and nitric oxide (NO). The chain is Monodehydroascorbate reductase 4, cytosolic from Oryza sativa subsp. japonica (Rice).